The sequence spans 470 residues: Glucose-1-phosphate adenylyltransferase (470 aa).

Residues Gly-164, 181-182 (EK), and Ser-199 each bind alpha-D-glucose 1-phosphate.

The protein belongs to the bacterial/plant glucose-1-phosphate adenylyltransferase family. Homotetramer.

The enzyme catalyses alpha-D-glucose 1-phosphate + ATP + H(+) = ADP-alpha-D-glucose + diphosphate. Its pathway is glycan biosynthesis; glycogen biosynthesis. Functionally, involved in the biosynthesis of ADP-glucose, a building block required for the elongation reactions to produce glycogen. Catalyzes the reaction between ATP and alpha-D-glucose 1-phosphate (G1P) to produce pyrophosphate and ADP-Glc. In Pseudarthrobacter chlorophenolicus (strain ATCC 700700 / DSM 12829 / CIP 107037 / JCM 12360 / KCTC 9906 / NCIMB 13794 / A6) (Arthrobacter chlorophenolicus), this protein is Glucose-1-phosphate adenylyltransferase.